The chain runs to 351 residues: Porphobilinogen deaminase (351 aa).

The residue at position 242 (C242) is an S-(dipyrrolylmethanemethyl)cysteine.

It belongs to the HMBS family. As to quaternary structure, monomer. Dipyrromethane is required as a cofactor.

The enzyme catalyses 4 porphobilinogen + H2O = hydroxymethylbilane + 4 NH4(+). It functions in the pathway porphyrin-containing compound metabolism; protoporphyrin-IX biosynthesis; coproporphyrinogen-III from 5-aminolevulinate: step 2/4. Tetrapolymerization of the monopyrrole PBG into the hydroxymethylbilane pre-uroporphyrinogen in several discrete steps. The chain is Porphobilinogen deaminase from Rickettsia peacockii (strain Rustic).